The chain runs to 291 residues: MKRVILFLLTNFAVMLVLSVTARILGVDRFLTSNGLNMGMLLVFAALIGFGGSFISLLMSKTMAKWSTGAQVIKQPSSQEEVWLVETVRRLSTKAGFAMPEVAIYDGAPNAFATGPSKSRSLVAVSTGLLHSMDRKQVEAVLAHEVSHINNGDMVTLTLIQGVLNTFVIFLSRIIAYAVDSFLRRDEDESGSPGIGYWISSIACEILFGILASIVVMFFSRKREYRADAGAAALMGDRRPMIDALRALGNLDAGQLPKEMAASGIAGGGMMALFSSHPPLESRIAALESAR.

2 helical membrane-spanning segments follow: residues 4 to 24 (VILFLLTNFAVMLVLSVTARI) and 38 to 58 (MGMLLVFAALIGFGGSFISLL). H144 is a binding site for Zn(2+). Residue E145 is part of the active site. Position 148 (H148) interacts with Zn(2+). The next 2 membrane-spanning stretches (helical) occupy residues 159-179 (LIQGVLNTFVIFLSRIIAYAV) and 199-219 (ISSIACEILFGILASIVVMFF). E224 is a binding site for Zn(2+).

The protein belongs to the peptidase M48B family. Zn(2+) is required as a cofactor.

It localises to the cell inner membrane. The protein is Protease HtpX homolog of Pelodictyon phaeoclathratiforme (strain DSM 5477 / BU-1).